We begin with the raw amino-acid sequence, 118 residues long: Large ribosomal subunit protein uL18 (118 aa).

The protein belongs to the universal ribosomal protein uL18 family. Part of the 50S ribosomal subunit; part of the 5S rRNA/L5/L18/L25 subcomplex. Contacts the 5S and 23S rRNAs.

In terms of biological role, this is one of the proteins that bind and probably mediate the attachment of the 5S RNA into the large ribosomal subunit, where it forms part of the central protuberance. The sequence is that of Large ribosomal subunit protein uL18 from Campylobacter jejuni subsp. doylei (strain ATCC BAA-1458 / RM4099 / 269.97).